The following is a 413-amino-acid chain: uncharacterized protein (413 aa).

A run of 12 helical transmembrane segments spans residues 42–62, 75–95, 109–129, 133–153, 157–179, 191–211, 238–258, 265–285, 304–324, 326–346, 362–382, and 383–403; these read FLGGFSSFSILYCVQSILPVF, LSLSAATATMSIGTLFIGPLS, LIAAVLTIICSISNNWTVIVF, LTGLALSGVVAVAMTYIVEEV, SVSFCMGLYISGNTIGGCSGRIL, IAFIVIGFFSLMSSCLFLYFL, PTLLILFAIGFMLMGSFITIF, LMLSPFFLSSSNIGFLSIIYL, SSILRIALLLMILGLLMTQYN, IFIIILGLVIFSSGFFASHSI, ATSLYLFFYYLGSSIFGTFGG, and FFWFYLKWIGISSFIIIILIF.

This sequence belongs to the major facilitator superfamily.

The protein resides in the cell membrane. This is an uncharacterized protein from Buchnera aphidicola subsp. Schizaphis graminum (strain Sg).